A 361-amino-acid polypeptide reads, in one-letter code: Chorismate synthase (361 aa).

2 residues coordinate NADP(+): arginine 48 and arginine 54. FMN contacts are provided by residues 125-127 (RSS), 238-239 (NA), glycine 278, 293-297 (KPTSS), and arginine 319.

This sequence belongs to the chorismate synthase family. In terms of assembly, homotetramer. FMNH2 serves as cofactor.

It carries out the reaction 5-O-(1-carboxyvinyl)-3-phosphoshikimate = chorismate + phosphate. The protein operates within metabolic intermediate biosynthesis; chorismate biosynthesis; chorismate from D-erythrose 4-phosphate and phosphoenolpyruvate: step 7/7. Catalyzes the anti-1,4-elimination of the C-3 phosphate and the C-6 proR hydrogen from 5-enolpyruvylshikimate-3-phosphate (EPSP) to yield chorismate, which is the branch point compound that serves as the starting substrate for the three terminal pathways of aromatic amino acid biosynthesis. This reaction introduces a second double bond into the aromatic ring system. In Edwardsiella ictaluri (strain 93-146), this protein is Chorismate synthase.